We begin with the raw amino-acid sequence, 146 residues long: Hemoglobin subunit beta-1/2 (146 aa).

The region spanning 2–146 is the Globin domain; sequence EWTDKERSII…VVSALGKQYH (145 aa). The heme b site is built by histidine 63 and histidine 92.

This sequence belongs to the globin family. Hb1 is a heterotetramer of two alpha-1 chains and two beta chains. Hb2 is a heterotetramer of two alpha-2 chains and two beta chains. In terms of tissue distribution, red blood cells.

Involved in oxygen transport from gills to the various peripheral tissues. In Trematomus newnesi (Dusky notothen), this protein is Hemoglobin subunit beta-1/2.